Reading from the N-terminus, the 281-residue chain is MEMO1 family protein APE_1771 (281 aa).

Belongs to the MEMO1 family.

This Aeropyrum pernix (strain ATCC 700893 / DSM 11879 / JCM 9820 / NBRC 100138 / K1) protein is MEMO1 family protein APE_1771.